Consider the following 277-residue polypeptide: 3-methyl-2-oxobutanoate hydroxymethyltransferase (277 aa).

Positions 43 and 82 each coordinate Mg(2+). 3-methyl-2-oxobutanoate contacts are provided by residues 43–44 (DS), aspartate 82, and lysine 112. Position 114 (glutamate 114) interacts with Mg(2+). Residue glutamate 181 is the Proton acceptor of the active site.

The protein belongs to the PanB family. Homodecamer; pentamer of dimers. Mg(2+) is required as a cofactor.

Its subcellular location is the cytoplasm. It catalyses the reaction 3-methyl-2-oxobutanoate + (6R)-5,10-methylene-5,6,7,8-tetrahydrofolate + H2O = 2-dehydropantoate + (6S)-5,6,7,8-tetrahydrofolate. It participates in cofactor biosynthesis; (R)-pantothenate biosynthesis; (R)-pantoate from 3-methyl-2-oxobutanoate: step 1/2. Its function is as follows. Catalyzes the reversible reaction in which hydroxymethyl group from 5,10-methylenetetrahydrofolate is transferred onto alpha-ketoisovalerate to form ketopantoate. The protein is 3-methyl-2-oxobutanoate hydroxymethyltransferase of Listeria monocytogenes serovar 1/2a (strain ATCC BAA-679 / EGD-e).